The chain runs to 243 residues: UPF0758 protein SYNPCC7002_A0220 (243 aa).

One can recognise an MPN domain in the interval 112–235; it reads IIVDSPEAAA…FGSLRQKTAL (124 aa). Zn(2+) contacts are provided by histidine 184, histidine 186, and aspartate 197. The JAMM motif signature appears at 184 to 197; that stretch reads HNHPSGNVDPSPED.

It belongs to the UPF0758 family.

The sequence is that of UPF0758 protein SYNPCC7002_A0220 from Picosynechococcus sp. (strain ATCC 27264 / PCC 7002 / PR-6) (Agmenellum quadruplicatum).